The chain runs to 299 residues: uncharacterized protein (299 aa).

Residues 1 to 20 form a disordered region; that stretch reads MTTKHELVINTNEPSAPNAD. Residues 172 to 192 traverse the membrane as a helical segment; it reads SFFIPPMVVISTPICLGLTVF.

It belongs to the IIV-6 259R family.

It localises to the membrane. This is an uncharacterized protein from Acheta domesticus (House cricket).